The sequence spans 546 residues: Probable T-complex protein 1 subunit theta (546 aa).

The disordered stretch occupies residues methionine 527–aspartate 546.

It belongs to the TCP-1 chaperonin family. Heterooligomeric complex of about 850 to 900 kDa that forms two stacked rings, 12 to 16 nm in diameter.

It is found in the cytoplasm. Molecular chaperone; assists the folding of proteins upon ATP hydrolysis. Known to play a role, in vitro, in the folding of actin and tubulin. This Schizosaccharomyces pombe (strain 972 / ATCC 24843) (Fission yeast) protein is Probable T-complex protein 1 subunit theta (cct8).